Here is a 56-residue protein sequence, read N- to C-terminus: Large ribosomal subunit protein bL32 (56 aa).

Residues Met-1–Gln-26 are disordered. The segment covering Lys-7–Arg-16 has biased composition (basic residues).

Belongs to the bacterial ribosomal protein bL32 family.

In Shewanella denitrificans (strain OS217 / ATCC BAA-1090 / DSM 15013), this protein is Large ribosomal subunit protein bL32.